We begin with the raw amino-acid sequence, 295 residues long: Protease HtpX (295 aa).

A run of 2 helical transmembrane segments spans residues 4 to 24 and 42 to 62; these read ILLFLATNLAVVLIASITLSL and QLLVFCAVFGFAGSLFSLFIS. His147 lines the Zn(2+) pocket. Glu148 is a catalytic residue. His151 is a binding site for Zn(2+). 2 consecutive transmembrane segments (helical) span residues 158–178 and 199–219; these read VTLALVQGVVNTFVMFFARII and ITTIFAELVLGFLASAIVMWF. Glu224 lines the Zn(2+) pocket.

Belongs to the peptidase M48B family. Zn(2+) serves as cofactor.

Its subcellular location is the cell inner membrane. This Pseudomonas syringae pv. syringae (strain B728a) protein is Protease HtpX.